A 102-amino-acid chain; its full sequence is Acid shock protein (102 aa).

A signal peptide spans 1-21 (MKKVLALVVAAAMGLSSAAFA). The segment covering 22-41 (AETATTPAPTATTTKAAPAK) has biased composition (low complexity). The propeptide occupies 22-58 (AETATTPAPTATTTKAAPAKTTHHKKQHKAAPAQKAQ). Residues 22–102 (AETATTPAPT…PAKPAAQPAA (81 aa)) are disordered. Over residues 80 to 90 (AAKKHARKHSH) the composition is skewed to basic residues. The segment covering 91-102 (QQPAKPAAQPAA) has biased composition (low complexity).

It belongs to the Asr family. In terms of processing, proteolytic processing gives rise to the active protein.

The protein resides in the periplasm. Its function is as follows. Required for growth and/or survival at acidic conditions. This is Acid shock protein from Escherichia coli O127:H6 (strain E2348/69 / EPEC).